The following is a 249-amino-acid chain: MTRYKAIISYDGHDFSGFQRQPHARTVQEEIEKTLVRLNSGQPVTVHGAGRTDAGVHAYGQVIHFDLAGSRDVEKLRFALDTQTSEDIDVVSVEQVADDFHCRYAKHSKTYEFLVDIGRPKNPMMRHYATFYPYDLDLSLIEEAIQDLVGTHDFTGFTASGTSVEDNVRTITVASMEYDQQRQFLIFTFSGNGFLYKQVRNMVGTLLKIGNGRMPVGQIKRILAEKDRGLAGPTAAGNGLYLKEIIYED.

Aspartate 53 acts as the Nucleophile in catalysis. Tyrosine 111 is a binding site for substrate.

Belongs to the tRNA pseudouridine synthase TruA family. As to quaternary structure, homodimer.

The enzyme catalyses uridine(38/39/40) in tRNA = pseudouridine(38/39/40) in tRNA. Formation of pseudouridine at positions 38, 39 and 40 in the anticodon stem and loop of transfer RNAs. This Streptococcus suis (strain 05ZYH33) protein is tRNA pseudouridine synthase A.